The chain runs to 460 residues: Argininosuccinate lyase (460 aa).

The protein belongs to the lyase 1 family. Argininosuccinate lyase subfamily.

It is found in the cytoplasm. The catalysed reaction is 2-(N(omega)-L-arginino)succinate = fumarate + L-arginine. Its pathway is amino-acid biosynthesis; L-arginine biosynthesis; L-arginine from L-ornithine and carbamoyl phosphate: step 3/3. This Prosthecochloris aestuarii (strain DSM 271 / SK 413) protein is Argininosuccinate lyase.